The chain runs to 578 residues: Potassium-transporting ATPase potassium-binding subunit (578 aa).

11 helical membrane passes run 3-23, 67-87, 95-115, 136-156, 181-201, 264-284, 291-311, 396-416, 436-456, 504-524, and 543-563; these read AAAL…AVPL, AAAA…LERL, PAGL…SFAT, ALTV…AALV, LLLP…VPQT, LEAL…GALV, WTVY…TVSA, GLYG…LMVG, LAIL…CLLP, VAML…AGAF, and LFAG…FLPA.

Belongs to the KdpA family. In terms of assembly, the system is composed of three essential subunits: KdpA, KdpB and KdpC.

Its subcellular location is the cell inner membrane. Part of the high-affinity ATP-driven potassium transport (or Kdp) system, which catalyzes the hydrolysis of ATP coupled with the electrogenic transport of potassium into the cytoplasm. This subunit binds the periplasmic potassium ions and delivers the ions to the membrane domain of KdpB through an intramembrane tunnel. This chain is Potassium-transporting ATPase potassium-binding subunit, found in Anaeromyxobacter dehalogenans (strain 2CP-C).